Reading from the N-terminus, the 191-residue chain is Flagellar transcriptional regulator FlhC (191 aa).

Zn(2+) is bound by residues C137, C140, C157, and C160.

It belongs to the FlhC family. As to quaternary structure, heterohexamer composed of two FlhC and four FlhD subunits. Each FlhC binds a FlhD dimer, forming a heterotrimer, and a hexamer assembles by dimerization of two heterotrimers. The cofactor is Zn(2+).

It localises to the cytoplasm. Functionally, functions in complex with FlhD as a master transcriptional regulator that regulates transcription of several flagellar and non-flagellar operons by binding to their promoter region. Activates expression of class 2 flagellar genes, including fliA, which is a flagellum-specific sigma factor that turns on the class 3 genes. Also regulates genes whose products function in a variety of physiological pathways. In Nitrosomonas eutropha (strain DSM 101675 / C91 / Nm57), this protein is Flagellar transcriptional regulator FlhC.